The chain runs to 213 residues: Probable aspartate aminotransferase (213 aa).

L-aspartate contacts are provided by glycine 47, tryptophan 133, and asparagine 183.

Belongs to the class-I pyridoxal-phosphate-dependent aminotransferase family. Homodimer. It depends on pyridoxal 5'-phosphate as a cofactor.

It localises to the cytoplasm. The catalysed reaction is L-aspartate + 2-oxoglutarate = oxaloacetate + L-glutamate. This is Probable aspartate aminotransferase (aspC) from Streptomyces griseus.